The primary structure comprises 610 residues: Sterol O-acyltransferase 1 (610 aa).

S21 and S45 each carry phosphoserine. Positions 41 to 81 are disordered; the sequence is SMEVSPRSSTTSLVEPVESTEGVESTEAERVAGKQEQEEEY. Residues 67 to 76 show a composition bias toward basic and acidic residues; it reads EAERVAGKQE. The next 5 helical transmembrane spans lie at 182 to 202, 229 to 249, 264 to 284, 371 to 391, and 409 to 429; these read LESN…WIAI, LFTI…VVFV, GFVA…PIYV, ISCS…QINY, and IIGT…PVAM. An FYXDWWN motif motif is present at residues 491-497; that stretch reads FYGDWWN. 2 helical membrane passes run 535–555 and 590–610; these read ATLF…FAIF and VVFS…YLTL. Residue H547 is part of the active site.

Belongs to the membrane-bound acyltransferase family. Sterol o-acyltransferase subfamily.

The protein resides in the endoplasmic reticulum membrane. The enzyme catalyses lanosterol + an acyl-CoA = lanosteryl ester + CoA. Its function is as follows. Sterol O-acyltransferase that catalyzes the formation of stery esters. This is Sterol O-acyltransferase 1 from Saccharomyces cerevisiae (strain ATCC 204508 / S288c) (Baker's yeast).